Reading from the N-terminus, the 274-residue chain is Putative deoxyribonuclease TATDN1 homolog (274 aa).

Positions 105, 139, 162, and 208 each coordinate a divalent metal cation.

This sequence belongs to the metallo-dependent hydrolases superfamily. TatD-type hydrolase family. A divalent metal cation serves as cofactor.

Its subcellular location is the nucleus. Functionally, putative deoxyribonuclease. In Enterocytozoon bieneusi (strain H348) (Microsporidian parasite), this protein is Putative deoxyribonuclease TATDN1 homolog.